The sequence spans 1010 residues: Plasma membrane ATPase 2 (1010 aa).

A compositionally biased stretch (basic and acidic residues) spans 1-14; the sequence is MQRNNGEGRPEGMH. 2 disordered regions span residues 1-126 and 139-165; these read MQRN…EDED and QDQEEEQVEEEESPGPAGAAKVVPEEL. Topologically, residues 1–201 are cytoplasmic; that stretch reads MQRNNGEGRP…KEEKTNNIKK (201 aa). The span at 25–34 shows a compositional bias: polar residues; the sequence is FKNNASPQDD. A compositionally biased stretch (acidic residues) spans 42-52; it reads YEEGGVEDSAV. Residues 68-106 are compositionally biased toward polar residues; that stretch reads APNTHAQQANLQSGNTSITHETQSTSRGQEATTSPSLSA. Residues 140–151 show a composition bias toward acidic residues; sequence DQEEEQVEEEES. The helical transmembrane segment at 202 to 222 threads the bilayer; the sequence is FLSFFVGPIQFVMELAAALAA. The Extracellular portion of the chain corresponds to 223–226; it reads GLRD. The helical transmembrane segment at 227–246 threads the bilayer; it reads WVDFGVICALLLLNATVGFV. Residues 247–377 are Cytoplasmic-facing; it reads QEYQAGSIVD…SQGHFTEVLN (131 aa). The chain crosses the membrane as a helical span at residues 378–399; sequence GIGTILLVLVILTLLCIYTAAF. The Extracellular portion of the chain corresponds to 400-410; the sequence is YRSVRLAALLE. The chain crosses the membrane as a helical span at residues 411-433; the sequence is YTLAITIIGVPVGLPAVVTTTMA. Residues 434 to 805 are Cytoplasmic-facing; that stretch reads VGAAYLAKKK…LIIRNQLLNL (372 aa). Asp464 functions as the 4-aspartylphosphate intermediate in the catalytic mechanism. Residues Asp720 and Asp724 each coordinate Mg(2+). The chain crosses the membrane as a helical span at residues 806 to 824; sequence ELIVFIAIFADVATLAIAY. The Extracellular segment spans residues 825–840; that stretch reads DNAPYAMKPVKWNLPR. A helical membrane pass occupies residues 841 to 860; the sequence is LWGLATIVGILLAIGTWIVN. The Cytoplasmic portion of the chain corresponds to 861–912; it reads TTMIAQGQNRGIVQNFGVQDEVLFLQISLTENWLIFITRCSGPFWSSFPSWQ. The chain crosses the membrane as a helical span at residues 913 to 933; sequence LSGAVLVVDILATLFCIFGWF. Residues 934–946 lie on the Extracellular side of the membrane; it reads KGGHQTSIVAVIR. A helical transmembrane segment spans residues 947 to 963; the sequence is IWMYSFGIFCLIAGVYY. Over 964–1010 the chain is Cytoplasmic; the sequence is ILSESSSFDRWMHGKHKERGTTRKLEDFVMQLQRTSTHHEAEGKVTS.

This sequence belongs to the cation transport ATPase (P-type) (TC 3.A.3) family. Type IIIA subfamily. Post-translationally, in addition to transient phosphorylation of the active site Asp residue, this protein, but not the product of the pma1 locus, is phosphorylated efficiently in isolated plasma membrane.

The protein localises to the cell membrane. The catalysed reaction is ATP + H2O + H(+)(in) = ADP + phosphate + 2 H(+)(out). In terms of biological role, the plasma membrane ATPase of plants and fungi is a hydrogen ion pump. The proton gradient it generates drives the active transport of nutrients by H(+)-symport. The resulting external acidification and/or internal alkinization may mediate growth responses. The chain is Plasma membrane ATPase 2 (pma2) from Schizosaccharomyces pombe (strain 972 / ATCC 24843) (Fission yeast).